The chain runs to 380 residues: Growth-regulating factor 4 (380 aa).

A disordered region spans residues Met1–Ser21. The region spanning Phe82 to Lys117 is the QLQ domain. The WRC domain occupies Asp151–Thr195. 2 short sequence motifs (bipartite nuclear localization signal) span residues Arg156–Arg166 and Arg184–Lys191. 2 disordered regions span residues Asn222–Asp270 and Arg284–Asn330. Low complexity-rich tracts occupy residues Ser228–Ser245 and Ser285–Ser296. A compositionally biased stretch (polar residues) spans Thr297–Gly320.

This sequence belongs to the GRF family. In terms of tissue distribution, strongly expressed in actively growing and developing tissues, such as roots, upper stems, and shoot tips containing the shoot apical meristem (SAM) and flower buds. Also expressed in mature flowers, but weakly expressed in mature stems and leaves.

The protein resides in the nucleus. Functionally, transcription activator that plays a role in the regulation of cell expansion in leaf and cotyledons tissues. Component of a network formed by miR396, the GRFs and their interacting factors (GIFs) acting in the regulation of meristem function, at least partially through the control of cell proliferation. In Arabidopsis thaliana (Mouse-ear cress), this protein is Growth-regulating factor 4 (GRF4).